Consider the following 1394-residue polypeptide: DNA-directed RNA polymerase subunit beta' (1394 aa).

Zn(2+) is bound by residues Cys71, Cys73, Cys86, and Cys89. Asp462, Asp464, and Asp466 together coordinate Mg(2+). 4 residues coordinate Zn(2+): Cys811, Cys885, Cys892, and Cys895.

Belongs to the RNA polymerase beta' chain family. As to quaternary structure, the RNAP catalytic core consists of 2 alpha, 1 beta, 1 beta' and 1 omega subunit. When a sigma factor is associated with the core the holoenzyme is formed, which can initiate transcription. Mg(2+) serves as cofactor. It depends on Zn(2+) as a cofactor.

It carries out the reaction RNA(n) + a ribonucleoside 5'-triphosphate = RNA(n+1) + diphosphate. Its function is as follows. DNA-dependent RNA polymerase catalyzes the transcription of DNA into RNA using the four ribonucleoside triphosphates as substrates. This chain is DNA-directed RNA polymerase subunit beta', found in Xanthobacter autotrophicus (strain ATCC BAA-1158 / Py2).